The sequence spans 138 residues: Acidic phospholipase A2 Cvv-E6e (138 aa).

The first 16 residues, 1 to 16 (MRTLWILAVLLLGVEG), serve as a signal peptide directing secretion. 7 disulfide bridges follow: Cys-42-Cys-131, Cys-44-Cys-60, Cys-59-Cys-111, Cys-65-Cys-138, Cys-66-Cys-104, Cys-73-Cys-97, and Cys-91-Cys-102. Ca(2+) is bound by residues Tyr-43, Gly-45, and Gly-47. Residue His-63 is part of the active site. Ca(2+) is bound at residue Asp-64. Residue Asp-105 is part of the active site.

It depends on Ca(2+) as a cofactor. As to expression, expressed by the venom gland.

It is found in the secreted. The catalysed reaction is a 1,2-diacyl-sn-glycero-3-phosphocholine + H2O = a 1-acyl-sn-glycero-3-phosphocholine + a fatty acid + H(+). Functionally, snake venom phospholipase A2 (PLA2) that significantly inhibits ADP-induced platelet aggregation in platelet-rich plasma of human, rabbit and guinea pig. PLA2 catalyzes the calcium-dependent hydrolysis of the 2-acyl groups in 3-sn-phosphoglycerides. The protein is Acidic phospholipase A2 Cvv-E6e of Crotalus viridis viridis (Prairie rattlesnake).